Reading from the N-terminus, the 350-residue chain is N-acetyllactosaminide beta-1,3-N-acetylglucosaminyltransferase 4 (350 aa).

Over 1–4 (MLPR) the chain is Cytoplasmic. A helical; Signal-anchor for type II membrane protein membrane pass occupies residues 5–25 (LGCVLFCSLVVLLLSCLLLLK). At 26–350 (ERIPAGSSKA…RLKCAATHKP (325 aa)) the chain is on the lumenal side. N-linked (GlcNAc...) asparagine glycosylation is found at asparagine 53 and asparagine 166.

Belongs to the glycosyltransferase 31 family.

It is found in the golgi apparatus membrane. The enzyme catalyses a beta-D-galactosyl-(1-&gt;4)-N-acetyl-beta-D-glucosaminyl derivative + UDP-N-acetyl-alpha-D-glucosamine = an N-acetyl-beta-D-glucosaminyl-(1-&gt;3)-beta-D-galactosyl-(1-&gt;4)-N-acetyl-beta-D-glucosaminyl derivative + UDP + H(+). It functions in the pathway protein modification; protein glycosylation. Functionally, beta-1,3-N-acetylglucosaminyltransferase involved in the synthesis of poly-N-acetyllactosamine. Has activity for type 2 oligosaccharides. The protein is N-acetyllactosaminide beta-1,3-N-acetylglucosaminyltransferase 4 (B3gnt4) of Mus musculus (Mouse).